The primary structure comprises 525 residues: Zwittermicin A synthase ZmaJ (525 aa).

It belongs to the ATP-dependent AMP-binding enzyme family.

It catalyses the reaction holo-[peptidyl-carrier protein] + L-serine + ATP = L-seryl-[peptidyl-carrier protein] + AMP + diphosphate. It participates in antibiotic biosynthesis. In terms of biological role, involved in the biosynthesis of the linear aminopolyol antibiotic zwittermicin A (ZmA). Specifically adenylates L-serine and loads it onto the holo form of ZmaH via a thioester linkage to the phosphopanthetheine moiety. This Bacillus cereus protein is Zwittermicin A synthase ZmaJ.